The sequence spans 551 residues: High-affinity glucose transporter (551 aa).

Over 1–27 the chain is Cytoplasmic; it reads MSLKNWLLLRDIQYEGTFYKKFPHVYN. A helical transmembrane segment spans residues 28–48; the sequence is IYVIGFIACISGLMFGFDIAS. The Extracellular segment spans residues 49–70; it reads MSSMIGTDVYKDYFSNPDSLTY. A helical membrane pass occupies residues 71-91; it reads GGITASMAGGSFLGSLISPNF. At 92–98 the chain is on the cytoplasmic side; sequence SDAFGRK. The chain crosses the membrane as a helical span at residues 99–119; sequence VSLHICAALWIIGAILQCAAQ. The Extracellular segment spans residues 120–123; it reads DQAM. A helical membrane pass occupies residues 124 to 144; it reads LIVGRVISGMGIGFGSSAAPV. The Cytoplasmic portion of the chain corresponds to 145–155; it reads YCSEISPPKIR. The chain crosses the membrane as a helical span at residues 156–176; the sequence is GTISGLFQFSVTVGIMVLFYI. At 177–190 the chain is on the extracellular side; the sequence is GYGCHFIDGAAAFR. A helical transmembrane segment spans residues 191–211; the sequence is ITWGLQMVPGLILMVGVFFIP. At 212-289 the chain is on the cytoplasmic side; it reads ESPRWLANHD…VGVSAQMWQQ (78 aa). The chain crosses the membrane as a helical span at residues 290 to 310; that stretch reads LCGMNVMMYYIVYIFNMAGYT. At 311–315 the chain is on the extracellular side; sequence GNTNL. Residues 316 to 336 traverse the membrane as a helical segment; it reads VASSIQYVLNVVMTIPALFLI. Residues 337–343 lie on the Cytoplasmic side of the membrane; sequence DKFGRRP. Residues 344–364 form a helical membrane-spanning segment; it reads VLIIGGIFMFTWLFSVAGILA. Over 365 to 395 the chain is Extracellular; it reads TYSVPAPGGVNGDDTVTIQIPSENTSAANGV. N-linked (GlcNAc...) asparagine glycosylation is present at N388. Residues 396-416 form a helical membrane-spanning segment; that stretch reads IASSYLFVCFFAPTWGIGIWI. Topologically, residues 417 to 432 are cytoplasmic; that stretch reads YCSEIFNNMERAKGSA. Residues 433 to 453 traverse the membrane as a helical segment; that stretch reads LSAATNWAFNFALAMFVPSAF. At 454-459 the chain is on the extracellular side; it reads KNISWK. A helical membrane pass occupies residues 460–480; that stretch reads TYIIFGVFSVALTIQTFFMFP. Topologically, residues 481 to 551 are cytoplasmic; sequence ETKGKTLEEI…DRSDSASNSN (71 aa).

The protein belongs to the major facilitator superfamily. Sugar transporter (TC 2.A.1.1) family.

The protein localises to the membrane. Its function is as follows. High-affinity glucose transporter. This chain is High-affinity glucose transporter (HGT1), found in Kluyveromyces lactis (strain ATCC 8585 / CBS 2359 / DSM 70799 / NBRC 1267 / NRRL Y-1140 / WM37) (Yeast).